An 806-amino-acid polypeptide reads, in one-letter code: Polyribonucleotide nucleotidyltransferase (806 aa).

Positions 488 and 494 each coordinate Mg(2+). In terms of domain architecture, KH spans 555 to 614 (PQIRTVQIPTDKIRDLIGPGGKTIRGIIEATQVKIDVDDTGRVNIASSDEEGLKKALAMI). The region spanning 624–691 (GKTYLGKVVR…EGNRIKLSRK (68 aa)) is the S1 motif domain. Residues 698-806 (RQKLGLPEPG…QGGGGNRGPQ (109 aa)) form a disordered region. Positions 704–717 (PEPGAEAPAAAEGQ) are enriched in low complexity. The span at 738-757 (GGEDFDDFDEEGGEGEGEDE) shows a compositional bias: acidic residues. The segment covering 758-774 (NFNREDTPNSAPGERRP) has biased composition (basic and acidic residues). Residues 783 to 792 (RGRRRRRGRG) show a composition bias toward basic residues. Over residues 793–806 (RGPGQGGGGNRGPQ) the composition is skewed to gly residues.

Belongs to the polyribonucleotide nucleotidyltransferase family. Mg(2+) is required as a cofactor.

The protein localises to the cytoplasm. It carries out the reaction RNA(n+1) + phosphate = RNA(n) + a ribonucleoside 5'-diphosphate. Involved in mRNA degradation. Catalyzes the phosphorolysis of single-stranded polyribonucleotides processively in the 3'- to 5'-direction. This is Polyribonucleotide nucleotidyltransferase from Acidobacterium capsulatum (strain ATCC 51196 / DSM 11244 / BCRC 80197 / JCM 7670 / NBRC 15755 / NCIMB 13165 / 161).